The following is a 345-amino-acid chain: G-protein coupled receptor family C group 5 member D (345 aa).

Over 1–27 the chain is Extracellular; that stretch reads MYKDCIESTGDYFLLCDAEGPWGIILE. Residues 28–48 traverse the membrane as a helical segment; that stretch reads SLAILGIVVTILLLLAFLFLM. Topologically, residues 49–63 are cytoplasmic; the sequence is RKIQDCSQWNVLPTQ. The helical transmembrane segment at 64–84 threads the bilayer; the sequence is LLFLLSVLGLFGLAFAFIIEL. Residues 85–93 lie on the Extracellular side of the membrane; sequence NQQTAPVRY. Residues 94 to 114 traverse the membrane as a helical segment; the sequence is FLFGVLFALCFSCLLAHASNL. At 115 to 123 the chain is on the cytoplasmic side; sequence VKLVRGCVS. A helical transmembrane segment spans residues 124–144; the sequence is FSWTTILCIAIGCSLLQIIIA. Residues 145-167 are Extracellular-facing; it reads TEYVTLIMTRGMMFVNMTPCQLN. The chain crosses the membrane as a helical span at residues 168-188; sequence VDFVVLLVYVLFLMALTFFVS. The Cytoplasmic portion of the chain corresponds to 189–204; it reads KATFCGPCENWKQHGR. Residues 205 to 225 form a helical membrane-spanning segment; that stretch reads LIFITVLFSIIIWVVWISMLL. The Extracellular segment spans residues 226–239; the sequence is RGNPQFQRQPQWDD. Residues 240-260 traverse the membrane as a helical segment; the sequence is PVVCIALVTNAWVFLLLYIVP. The Cytoplasmic portion of the chain corresponds to 261–345; it reads ELCILYRSCR…LSPQQDAGGV (85 aa).

The protein belongs to the G-protein coupled receptor 3 family. Homodimer. As to expression, widely expressed in the peripheral system. Expression pattern is high in pancreas, medium in kidney, small intestine, spleen and testis, low in lung, colon, leukocyte, prostate and thymus and not detectable in brain, heart, liver, placenta, skeletal muscle and ovary.

The protein resides in the cell membrane. In terms of biological role, G-protein coupled receptor involved in hard keratin expression and likely plays a role in the development of hair and nails. This is G-protein coupled receptor family C group 5 member D (GPRC5D) from Homo sapiens (Human).